The chain runs to 448 residues: Probable D-serine dehydratase (448 aa).

The residue at position 119 (Lys119) is an N6-(pyridoxal phosphate)lysine.

It belongs to the serine/threonine dehydratase family. DsdA subfamily. The cofactor is pyridoxal 5'-phosphate.

The enzyme catalyses D-serine = pyruvate + NH4(+). In Pseudomonas paraeruginosa (strain DSM 24068 / PA7) (Pseudomonas aeruginosa (strain PA7)), this protein is Probable D-serine dehydratase.